Reading from the N-terminus, the 421-residue chain is UDP-N-acetylglucosamine 1-carboxyvinyltransferase (421 aa).

A phosphoenolpyruvate-binding site is contributed by 22–23 (KN). Residue arginine 93 participates in UDP-N-acetyl-alpha-D-glucosamine binding. Cysteine 117 (proton donor) is an active-site residue. The residue at position 117 (cysteine 117) is a 2-(S-cysteinyl)pyruvic acid O-phosphothioketal. Residues 122–126 (RPVDL), aspartate 308, and isoleucine 330 each bind UDP-N-acetyl-alpha-D-glucosamine.

The protein belongs to the EPSP synthase family. MurA subfamily.

It is found in the cytoplasm. It catalyses the reaction phosphoenolpyruvate + UDP-N-acetyl-alpha-D-glucosamine = UDP-N-acetyl-3-O-(1-carboxyvinyl)-alpha-D-glucosamine + phosphate. Its pathway is cell wall biogenesis; peptidoglycan biosynthesis. In terms of biological role, cell wall formation. Adds enolpyruvyl to UDP-N-acetylglucosamine. The protein is UDP-N-acetylglucosamine 1-carboxyvinyltransferase of Pseudomonas entomophila (strain L48).